The chain runs to 778 residues: MMKNLNGRAHNACYHPYLHQLHQAQQLQHQQQQQQQQQQQTQLQQTPHAAHTQQNGLTQNAQPQIQWPYNSSAAANQYYQQQQQQQQQEQQMLRQRQLPTQQPAASYEQQQQQPQQHQHLQQQQQQHQLRQTFTNAATNTNAAAMAAMCQMQNFFTQQQQQQQQQEFNNNCVHINYNQQQQQQPTAAVATTTPTQKATPTKTTPTNNPTTTTNNSTTTTTTNGDKFAMDASEIASFLASELFMQQLGTFDGIQSAPTLTTPTLTPTTLRSIEETFFEMTNDAPYQAGFKPPPLAPLVNNNNNNNGNGNGNGNGNGNVLASSVVPTTTTTATIIGVSNPLISQQQQQQQQQVFDCGASVMPGSDTEESNGSWADGQMNEDQSISDTSSGATDSTSYQNGHMMGNSGGGNGGGTGGANNFSNVLAAAGRNTNTSNSATPARRGGGRRPNRSANMTPEEEEKRRIRRERNKQAAARCRKRRVDQTNELTEEVELLEKRGENLKKEMELLNETKNQLEYFLQAHRPTCQKVRADMLSVTTCNGLIGPPALLSAGSCGSGSSHHNNNSNSNDSSSGTITGLDATLNSTGRSNSPLDLKPVPIDEDLLLHIKDEPLDGALDSSSSLDQDGPPPHKRFALPNIATLMTPTGPAGSLQTPVSGTAPHGFGSFPTTISNISNISSIHNGPTLNSLNKMPKERPNTLAFQRPFGGQMQLSGSGRAPTQIQGVPIQTPSTGTFNFDSLMDGGTGLTPVSGPLIPNCTSQNKHPLELPTPTTEPSKLVSL.

Composition is skewed to low complexity over residues 24–54 (AQQL…HTQQ) and 77–98 (QYYQ…QRQL). Disordered regions lie at residues 24–57 (AQQL…QNGL), 76–130 (NQYY…HQLR), 183–223 (QPTA…TTNG), 294–320 (APLV…VLAS), 356–414 (ASVM…GTGG), and 427–478 (RNTN…RKRR). A compositionally biased stretch (polar residues) spans 99-108 (PTQQPAASYE). Composition is skewed to low complexity over residues 109-130 (QQQQ…HQLR) and 183-222 (QPTA…TTTN). Positions 382-402 (ISDTSSGATDSTSYQNGHMMG) are enriched in low complexity. Gly residues predominate over residues 403-414 (NSGGGNGGGTGG). The segment covering 427 to 436 (RNTNTSNSAT) has biased composition (polar residues). The bZIP domain occupies 457–520 (EEKRRIRRER…NQLEYFLQAH (64 aa)). The basic motif stretch occupies residues 459–478 (KRRIRRERNKQAAARCRKRR). Residues 485-513 (LTEEVELLEKRGENLKKEMELLNETKNQL) form a leucine-zipper region. Residues 550 to 571 (GSCGSGSSHHNNNSNSNDSSSG) show a composition bias toward low complexity. Disordered stretches follow at residues 550–594 (GSCG…DLKP) and 756–778 (TSQN…LVSL). The span at 579–589 (TLNSTGRSNSP) shows a compositional bias: polar residues. Phosphoserine is present on serine 588.

This sequence belongs to the bZIP family. Fos subfamily. As to quaternary structure, homodimer. Heterodimer with Jra. The kay-Jra heterodimer binds more stably to the AP-1 site than either of the two proteins alone.

Its subcellular location is the nucleus. In terms of biological role, developmentally regulated transcription factor AP-1 binds and recognizes the enhancer DNA sequence: 5'-TGA[CG]TCA-3'. May play a role in the function or determination of a particular subset of cells in the developing embryo. It is able to carry out its function either independently of or in conjunction with Jra. The protein is Transcription factor kayak of Drosophila pseudoobscura pseudoobscura (Fruit fly).